A 661-amino-acid chain; its full sequence is Methyl-accepting chemotaxis protein McpA (661 aa).

At 1–16 (MKKILQLIKQRSITRK) the chain is on the cytoplasmic side. A helical transmembrane segment spans residues 17–37 (LLVSFLSILIIPVVILAIFAY). Residues 38-281 (QSASSSLDRQ…IHEAAQPVLH (244 aa)) lie on the Extracellular side of the membrane. A Cache domain is found at 152 to 228 (ITDPYKTAST…QSGTELKGDW (77 aa)). The chain crosses the membrane as a helical span at residues 282-302 (LALIVLAAAIIIGIIVMTLII). The region spanning 303 to 355 (RSITTPLKQLVGSSKRISEGDLTETIDIRSKDELGELGKSFNNMASSLRSLIH) is the HAMP domain. The Cytoplasmic segment spans residues 303–661 (RSITTPLKQL…RDMTKRFKIE (359 aa)). The residue at position 370 (glutamate 370) is a Glutamate methyl ester (Glu). The Methyl-accepting transducer domain maps to 374–610 (SAAQTSKATE…EVSGASEHIA (237 aa)). Residues glutamine 593 and glutamine 594 each carry the deamidated glutamine modification. Glutamine 594 is modified (glutamate methyl ester (Gln)). 2 positions are modified to glutamate methyl ester (Glu): glutamate 629 and glutamate 636.

It belongs to the methyl-accepting chemotaxis (MCP) protein family. In terms of assembly, interacts with FloT. Deamidated by CheD on Gln-593 and Gln-594, producing glutamate residues. The glutamate residues are then methylated. Other additional sites are deamidated and methylated as well.

It localises to the cell membrane. The protein resides in the membrane raft. Its function is as follows. Chemotactic-signal transducers respond to changes in the concentration of attractants and repellents in the environment, transduce a signal from the outside to the inside of the cell, and facilitate sensory adaptation through the variation of the level of methylation. All amino acids serve as attractants in B.subtilis, they appear to cause an increase in the turnover methyl groups, leading to methylation of an unidentified acceptor, while repellents have been shown to cause a decrease in methyl group turnover. The methyl groups are added by a methyltransferase and removed by a methylesterase. McpA is required for taxis towards glucose and alpha-methylglucoside. This chain is Methyl-accepting chemotaxis protein McpA (mcpA), found in Bacillus subtilis (strain 168).